The sequence spans 501 residues: G protein-activated inward rectifier potassium channel 1 (501 aa).

The interval 1 to 40 is disordered; sequence MSALRRKFGDDYQVVTTSSSGSGLQPQGPGQGPQQQLVPK. Topologically, residues 1-80 are cytoplasmic; that stretch reads MSALRRKFGD…LFTTLVDLKW (80 aa). The span at 18–37 shows a compositional bias: low complexity; that stretch reads SSSGSGLQPQGPGQGPQQQL. A helical membrane pass occupies residues 81 to 105; it reads RWNLFIFILTYTVAWLFMASMWWVI. Topologically, residues 106–129 are extracellular; that stretch reads AYTRGDLNKAHVGNYTPCVANVYN. Asparagine 119 is a glycosylation site (N-linked (GlcNAc...) asparagine). The segment at residues 130–141 is an intramembrane region (helical; Pore-forming); that stretch reads FPSAFLFFIETE. Residues 142–148 constitute an intramembrane region (pore-forming); that stretch reads ATIGYGY. The Selectivity filter motif lies at 143 to 148; it reads TIGYGY. Over 149 to 157 the chain is Extracellular; that stretch reads RYITDKCPE. The chain crosses the membrane as a helical span at residues 158-179; that stretch reads GIILFLFQSILGSIVDAFLIGC. Residues 180-501 are Cytoplasmic-facing; the sequence is MFIKMSQPKK…LRKMNSDRFT (322 aa). The polyphosphoinositide (PIP2)-binding stretch occupies residues 182-209; that stretch reads IKMSQPKKRAETLMFSEHAVISMRDGKL. Serine 385 and serine 424 each carry phosphoserine.

The protein belongs to the inward rectifier-type potassium channel (TC 1.A.2.1) family. KCNJ3 subfamily. Associates with KCNJ5/GIRK4 or KCNJ6/GIRK2 or KCNJ9/GIRK3 to form a G-protein activated heteromultimer pore-forming unit. The resulting inward current is much larger.

Its subcellular location is the membrane. The enzyme catalyses K(+)(in) = K(+)(out). Heteromultimer composed of KCNJ3/GIRK1 and KCNJ5/GIRK4 is activated by phosphatidylinositol 4,5 biphosphate (PtdIns(4,5)P2). Its function is as follows. Inward rectifier potassium channels are characterized by a greater tendency to allow potassium to flow into the cell rather than out of it. Their voltage dependence is regulated by the concentration of extracellular potassium; as external potassium is raised, the voltage range of the channel opening shifts to more positive voltages. The inward rectification is mainly due to the blockage of outward current by internal magnesium. This potassium channel is controlled by G proteins. This receptor plays a crucial role in regulating the heartbeat. In Bos taurus (Bovine), this protein is G protein-activated inward rectifier potassium channel 1 (KCNJ3).